Consider the following 266-residue polypeptide: N-acetylneuraminate lyase B (266 aa).

Aceneuramate-binding residues include Thr51 and Thr52. The active-site Proton donor is Tyr143. Lys173 (schiff-base intermediate with substrate) is an active-site residue. Residues Ser175, Gly197, Asp199, Glu200, and Ser216 each coordinate aceneuramate.

Belongs to the DapA family. NanA subfamily. Homotetramer.

The protein resides in the cytoplasm. The enzyme catalyses aceneuramate = aldehydo-N-acetyl-D-mannosamine + pyruvate. It functions in the pathway amino-sugar metabolism; N-acetylneuraminate degradation. In terms of biological role, catalyzes the cleavage of N-acetylneuraminic acid (sialic acid) to form pyruvate and N-acetylmannosamine via a Schiff base intermediate. It prevents sialic acids from being recycled and returning to the cell surface. Involved in the N-glycolylneuraminic acid (Neu5Gc) degradation pathway. This Xenopus laevis (African clawed frog) protein is N-acetylneuraminate lyase B (npl-b).